The sequence spans 357 residues: Guanine nucleotide-binding protein G(o) subunit alpha (357 aa).

Residue glycine 2 is the site of N-myristoyl glycine attachment. A lipid anchor (S-palmitoyl cysteine) is attached at cysteine 3. The region spanning 32–357 (KDIKLLLLGA…ANNLRGCGLY (326 aa)) is the G-alpha domain. The interval 35–48 (KLLLLGAGESGKST) is G1 motif. Residues 40 to 47 (GAGESGKS), 179 to 185 (LRTRVKT), 204 to 208 (DVGGQ), 273 to 276 (NKKD), and alanine 329 each bind GTP. The Mg(2+) site is built by serine 47 and threonine 185. A G2 motif region spans residues 177-185 (DILRTRVKT). A G3 motif region spans residues 200–209 (FKLFDVGGQR). The G4 motif stretch occupies residues 269 to 276 (ILFLNKKD). The G5 motif stretch occupies residues 327–332 (TCATDT).

It belongs to the G-alpha family. G(i/o/t/z) subfamily. G proteins are composed of 3 units; alpha, beta and gamma. The alpha chain contains the guanine nucleotide binding site.

Guanine nucleotide-binding proteins (G proteins) are involved as modulators or transducers in various transmembrane signaling systems. The G(o) protein function is not clear. The sequence is that of Guanine nucleotide-binding protein G(o) subunit alpha (SCGOA) from Mizuhopecten yessoensis (Japanese scallop).